The sequence spans 67 residues: Large ribosomal subunit protein bL35 (67 aa).

Residues 1-41 (MPKMKTHRGAAKRFKKTGTGKLKRSHAYTSHMFRHKSQKQK) are disordered.

The protein belongs to the bacterial ribosomal protein bL35 family.

This is Large ribosomal subunit protein bL35 from Shouchella clausii (strain KSM-K16) (Alkalihalobacillus clausii).